A 511-amino-acid polypeptide reads, in one-letter code: Histidine ammonia-lyase (511 aa).

The 5-imidazolinone (Ala-Gly) cross-link spans 142 to 144 (ASG). S143 is modified (2,3-didehydroalanine (Ser)).

It belongs to the PAL/histidase family. Contains an active site 4-methylidene-imidazol-5-one (MIO), which is formed autocatalytically by cyclization and dehydration of residues Ala-Ser-Gly.

Its subcellular location is the cytoplasm. The catalysed reaction is L-histidine = trans-urocanate + NH4(+). It participates in amino-acid degradation; L-histidine degradation into L-glutamate; N-formimidoyl-L-glutamate from L-histidine: step 1/3. The polypeptide is Histidine ammonia-lyase (Brucella suis (strain ATCC 23445 / NCTC 10510)).